We begin with the raw amino-acid sequence, 484 residues long: Cobyric acid synthase (484 aa).

Positions 249–438 (QLRVAVPVFT…LHGIFDRPET (190 aa)) constitute a GATase cobBQ-type domain. Catalysis depends on cysteine 330, which acts as the Nucleophile. Histidine 430 is an active-site residue.

Belongs to the CobB/CobQ family. CobQ subfamily.

It functions in the pathway cofactor biosynthesis; adenosylcobalamin biosynthesis. Catalyzes amidations at positions B, D, E, and G on adenosylcobyrinic A,C-diamide. NH(2) groups are provided by glutamine, and one molecule of ATP is hydrogenolyzed for each amidation. The sequence is that of Cobyric acid synthase from Vibrio cholerae serotype O1 (strain ATCC 39541 / Classical Ogawa 395 / O395).